The sequence spans 333 residues: Tetraacyldisaccharide 4'-kinase (333 aa).

Residue 60-67 (TVGGTGKT) participates in ATP binding.

It belongs to the LpxK family.

The catalysed reaction is a lipid A disaccharide + ATP = a lipid IVA + ADP + H(+). The protein operates within glycolipid biosynthesis; lipid IV(A) biosynthesis; lipid IV(A) from (3R)-3-hydroxytetradecanoyl-[acyl-carrier-protein] and UDP-N-acetyl-alpha-D-glucosamine: step 6/6. Functionally, transfers the gamma-phosphate of ATP to the 4'-position of a tetraacyldisaccharide 1-phosphate intermediate (termed DS-1-P) to form tetraacyldisaccharide 1,4'-bis-phosphate (lipid IVA). The chain is Tetraacyldisaccharide 4'-kinase from Pseudomonas putida (strain GB-1).